The sequence spans 360 residues: Phospho-N-acetylmuramoyl-pentapeptide-transferase (360 aa).

The next 10 helical transmembrane spans lie at 21–41 (YLTFRSVLALLTALLLSLWIG), 73–93 (TMGGLMILATITVSTLLWGDL), 94–114 (SNPYIWFSLFVLLGYGAIGFV), 132–152 (WKYFWLSLVSLIAIFGMYALG), 168–188 (IMPQLGLFYVVLAYFVIVGTS), 199–219 (GLAIMPTVFVAGAFAIIAWAT), 239–259 (LVIFCTAIVGAGLGFLWFNTY), 263–283 (VFMGDVGSLALGGALGTIAVL), 288–308 (FLLVIMGGVFVMETVSVILQV), and 338–358 (VIIRFWIISLMLVLFGLVTLK).

It belongs to the glycosyltransferase 4 family. MraY subfamily. The cofactor is Mg(2+).

Its subcellular location is the cell inner membrane. The enzyme catalyses UDP-N-acetyl-alpha-D-muramoyl-L-alanyl-gamma-D-glutamyl-meso-2,6-diaminopimeloyl-D-alanyl-D-alanine + di-trans,octa-cis-undecaprenyl phosphate = di-trans,octa-cis-undecaprenyl diphospho-N-acetyl-alpha-D-muramoyl-L-alanyl-D-glutamyl-meso-2,6-diaminopimeloyl-D-alanyl-D-alanine + UMP. It participates in cell wall biogenesis; peptidoglycan biosynthesis. In terms of biological role, catalyzes the initial step of the lipid cycle reactions in the biosynthesis of the cell wall peptidoglycan: transfers peptidoglycan precursor phospho-MurNAc-pentapeptide from UDP-MurNAc-pentapeptide onto the lipid carrier undecaprenyl phosphate, yielding undecaprenyl-pyrophosphoryl-MurNAc-pentapeptide, known as lipid I. This chain is Phospho-N-acetylmuramoyl-pentapeptide-transferase, found in Mannheimia succiniciproducens (strain KCTC 0769BP / MBEL55E).